The chain runs to 245 residues: 8-amino-3,8-dideoxy-manno-octulosonate cytidylyltransferase (245 aa).

Belongs to the KdsB family.

The protein localises to the cytoplasm. The catalysed reaction is 8-amino-3,8-dideoxy-alpha-D-manno-octulosonate + CTP = CMP-8-amino-3,8-dideoxy-alpha-D-manno-oct-2-ulosonate + diphosphate. It functions in the pathway bacterial outer membrane biogenesis; lipopolysaccharide biosynthesis. Functionally, activates KDO8N (a required 8-carbon sugar) for incorporation into bacterial lipopolysaccharide in the Shewanella genus. The polypeptide is 8-amino-3,8-dideoxy-manno-octulosonate cytidylyltransferase (Shewanella pealeana (strain ATCC 700345 / ANG-SQ1)).